A 570-amino-acid chain; its full sequence is Ferroportin (570 aa).

Topologically, residues 1 to 23 (MTKSRDQTHQEGCCGSLANYLTS) are cytoplasmic. The chain crosses the membrane as a helical span at residues 24–53 (AKFLLYLGHSLSTWGDRMWHFAVSVFLVEL). Fe cation contacts are provided by D39 and H43. At 54–57 (YGNS) the chain is on the extracellular side. Residues 58-84 (LLLTAVYGLVVAGSVLVLGAIIGDWVD) form a helical membrane-spanning segment. Over 85–87 (KNA) the chain is Cytoplasmic. The helical transmembrane segment at 88-118 (RLKVAQTSLVVQNVSVILCGIILMMVFLHKN) threads the bilayer. Over 119-126 (ELLNMYHG) the chain is Extracellular. A helical membrane pass occupies residues 127-162 (WVLTVCYILIITIANIANLASTATAITIQRDWIVVV). Residues 163-164 (AG) are Cytoplasmic-facing. Residues 165-195 (ENRSRLADMNATIRRIDQLTNILAPMAVGQI) traverse the membrane as a helical segment. The Extracellular portion of the chain corresponds to 196 to 202 (MTFGSPV). A helical membrane pass occupies residues 203–229 (IGCGFISGWNLVSMCVEYFLLWKVYQK). At 230 to 306 (TPALAVKAAL…DGWVSYYNQP (77 aa)) the chain is on the cytoplasmic side. A helical membrane pass occupies residues 307-333 (VFLAGMGLAFLYMTVLGFDCITTGYAY). C326 is a Fe cation binding site. Residues 334–338 (TQGLS) lie on the Extracellular side of the membrane. A helical transmembrane segment spans residues 339-366 (GSILSVLMGASAITGIMGTVAFTWLRRK). Topologically, residues 367–368 (CG) are cytoplasmic. A helical membrane pass occupies residues 369 to 391 (LVRTGLFSGLAQLSCLILCVISV). Topologically, residues 392-452 (FMPGSPLDLS…EMSTKSVPII (61 aa)) are extracellular. A helical membrane pass occupies residues 453-482 (SVSLLFAGVIAARIGLWSFDLTVTQLLQEN). Residues 483–487 (VIESE) lie on the Cytoplasmic side of the membrane. The helical transmembrane segment at 488-512 (RGIINGVQNSMNYLLDLLHFIMVIL) threads the bilayer. H506 lines the Fe cation pocket. Over 513–515 (APN) the chain is Extracellular. The chain crosses the membrane as a helical span at residues 516–541 (PEAFGLLVLISVSFVAMGHLMYFRFA). Residues 542–570 (QKTLGNQIFVCAPDEKEVTDESQPNTSVV) are Cytoplasmic-facing.

This sequence belongs to the ferroportin (FP) (TC 2.A.100) family. SLC40A subfamily. In terms of assembly, identified in a complex with STOM. Interacts with HAMP; affinity of the peptide hormone HAMP for SLC40A1 increases by 80-fold in the presence of iron and the interaction promotes SLC40A1 ubiquitination and degradation. Part of a complex composed of SLC40A1/ferroportin, TF/transferrin and HEPH/hephaestin that transfers iron from cells to transferrin. In terms of processing, polyubiquitinated by RNF217; leading to proteasomal degradation. Under conditions of high systemic iron levels, both the hormone peptide hepcidin/HAMP and holo(iron bound)-transferrin/TF induce the ubiquitination, internalization and proteasomal degradation of SLC40A1 to control iron release from cells.

The protein resides in the cell membrane. It is found in the basolateral cell membrane. The catalysed reaction is Fe(2+)(in) = Fe(2+)(out). Its activity is regulated as follows. During elevated serum iron levels, liver-derived hepcidin/HAMP negatively regulates cell surface SLC40A1 by inducing its ubiquitination, internalization, and degradation. Indeed, hepcidin/HAMP affinity towards ferroportin/SLC40A1 increases by 80-fold in the presence of iron. Transports Fe(2+) from the inside of a cell to the outside of the cell, playing a key role for maintaining systemic iron homeostasis. Transports iron from intestinal, splenic, hepatic cells, macrophages and erythrocytes into the blood to provide iron to other tissues. Controls therefore dietary iron uptake, iron recycling by macrophages and erythrocytes, and release of iron stores in hepatocytes. When iron is in excess in serum, circulating HAMP/hepcidin levels increase resulting in a degradation of SLC40A1, thus limiting the iron efflux to plasma. This is Ferroportin from Rattus norvegicus (Rat).